Consider the following 342-residue polypeptide: Nicotinate-nucleotide--dimethylbenzimidazole phosphoribosyltransferase (342 aa).

Residue Glu-311 is the Proton acceptor of the active site.

It belongs to the CobT family.

The enzyme catalyses 5,6-dimethylbenzimidazole + nicotinate beta-D-ribonucleotide = alpha-ribazole 5'-phosphate + nicotinate + H(+). Its pathway is nucleoside biosynthesis; alpha-ribazole biosynthesis; alpha-ribazole from 5,6-dimethylbenzimidazole: step 1/2. Its function is as follows. Catalyzes the synthesis of alpha-ribazole-5'-phosphate from nicotinate mononucleotide (NAMN) and 5,6-dimethylbenzimidazole (DMB). The polypeptide is Nicotinate-nucleotide--dimethylbenzimidazole phosphoribosyltransferase (Shewanella loihica (strain ATCC BAA-1088 / PV-4)).